The chain runs to 377 residues: Chaperone protein DnaJ (377 aa).

Residues 5–70 (DYYEILGVSK…QKRAAYDQYG (66 aa)) enclose the J domain. The CR-type zinc finger occupies 132–210 (GVTKEIRIPT…CHGHGRVEKT (79 aa)). Positions 145, 148, 162, 165, 184, 187, 198, and 201 each coordinate Zn(2+). CXXCXGXG motif repeat units follow at residues 145–152 (CDVCHGSG), 162–169 (CPTCHGAG), 184–191 (CPHCQGRG), and 198–205 (CNKCHGHG).

It belongs to the DnaJ family. In terms of assembly, homodimer. Zn(2+) is required as a cofactor.

It is found in the cytoplasm. Its function is as follows. Participates actively in the response to hyperosmotic and heat shock by preventing the aggregation of stress-denatured proteins and by disaggregating proteins, also in an autonomous, DnaK-independent fashion. Unfolded proteins bind initially to DnaJ; upon interaction with the DnaJ-bound protein, DnaK hydrolyzes its bound ATP, resulting in the formation of a stable complex. GrpE releases ADP from DnaK; ATP binding to DnaK triggers the release of the substrate protein, thus completing the reaction cycle. Several rounds of ATP-dependent interactions between DnaJ, DnaK and GrpE are required for fully efficient folding. Also involved, together with DnaK and GrpE, in the DNA replication of plasmids through activation of initiation proteins. The protein is Chaperone protein DnaJ of Klebsiella pneumoniae subsp. pneumoniae (strain ATCC 700721 / MGH 78578).